The following is a 964-amino-acid chain: Translation initiation factor IF-2 (964 aa).

Positions 105–119 (AALAESEASEAAPVV) are enriched in low complexity. Disordered regions lie at residues 105-133 (AALAESEASEAAPVVDAEEVARREEEHRR) and 146-378 (KARQ…PTEP). Basic and acidic residues-rich tracts occupy residues 123 to 133 (EVARREEEHRR), 146 to 183 (KARQEAMEREEAERRARQEAAEAEQKRQAELAAKKAEE), 197 to 253 (EAPR…RAIR), and 266 to 278 (PAERKAEEVKKAE). The span at 288–302 (KPAGEARPAAAKKPA) shows a compositional bias: low complexity. Residues 303–313 (APAPAAAPAPG) are compositionally biased toward pro residues. Residues 464–633 (TRPPVVTVMG…LLQAEVLELK (170 aa)) form the tr-type G domain. Residues 473–480 (GHVDHGKT) form a G1 region. Residue 473–480 (GHVDHGKT) coordinates GTP. A G2 region spans residues 498–502 (GITQH). The segment at 519 to 522 (DTPG) is G3. GTP contacts are provided by residues 519–523 (DTPGH) and 573–576 (TKVD). A G4 region spans residues 573-576 (TKVD). The interval 609–611 (SAK) is G5.

It belongs to the TRAFAC class translation factor GTPase superfamily. Classic translation factor GTPase family. IF-2 subfamily.

The protein resides in the cytoplasm. One of the essential components for the initiation of protein synthesis. Protects formylmethionyl-tRNA from spontaneous hydrolysis and promotes its binding to the 30S ribosomal subunits. Also involved in the hydrolysis of GTP during the formation of the 70S ribosomal complex. The protein is Translation initiation factor IF-2 of Ralstonia pickettii (strain 12J).